Consider the following 523-residue polypeptide: Signal peptide peptidase-like 2A (523 aa).

The signal sequence occupies residues M1–A25. At Q26–L175 the chain is on the lumenal side. 6 N-linked (GlcNAc...) asparagine glycosylation sites follow: N51, N61, N69, N119, N129, and N135. The PA domain occupies L70–L155. The helical transmembrane segment at V176–I196 threads the bilayer. Over E197–P224 the chain is Cytoplasmic. A helical membrane pass occupies residues L225–Y245. Over R246–W247 the chain is Lumenal. A helical membrane pass occupies residues L248–L268. Topologically, residues S269–N288 are cytoplasmic. The chain crosses the membrane as a helical span at residues I289 to V309. Residues F310–R315 are Lumenal-facing. A helical transmembrane segment spans residues W316–M336. Topologically, residues K337–C344 are cytoplasmic. A helical transmembrane segment spans residues V345–I365. D355 is a catalytic residue. At T366–S403 the chain is on the lumenal side. Residues V404–I424 traverse the membrane as a helical segment. The active site involves D416. The Cytoplasmic portion of the chain corresponds to A425–Y440. The helical transmembrane segment at I441–M461 threads the bilayer. At K462–T463 the chain is on the lumenal side. Residues G464–W484 traverse the membrane as a helical segment. The PAL signature appears at P466 to L468. Residues S485–Q523 lie on the Cytoplasmic side of the membrane. A YXXo lysosomal targeting motif motif is present at residues Y498 to M501.

The protein belongs to the peptidase A22B family. In terms of assembly, interacts with ITM2B. Glycosylated.

It localises to the late endosome membrane. The protein resides in the lysosome membrane. Its subcellular location is the membrane. Intramembrane-cleaving aspartic protease (I-CLiP) that cleaves type II membrane signal peptides in the hydrophobic plane of the membrane. Functions in FASLG, ITM2B and TNF processing. Catalyzes the intramembrane cleavage of the anchored fragment of shed TNF-alpha (TNF), which promotes the release of the intracellular domain (ICD) for signaling to the nucleus. Also responsible for the intramembrane cleavage of Fas antigen ligand FASLG, which promotes the release of the intracellular FasL domain (FasL ICD). Essential for degradation of the invariant chain CD74 that plays a central role in the function of antigen-presenting cells in the immune system. Plays a role in the regulation of innate and adaptive immunity. The sequence is that of Signal peptide peptidase-like 2A from Mus musculus (Mouse).